A 435-amino-acid chain; its full sequence is MPHLENVVLCRESQVSILQSLFGERHHFSFPSIFIYGHTASGKTYVTQTLLKTLELPHVFVNCVECFTLRLLLEQILNKLNHLSSSEDGCSTEITCETFNDFVRLFKQVTTAENLKDQTVYIVLDKAEYLRDMEANLLPGFLRLQELADRNVTVLFLSEIVWEKFRPNTGCFEPFVLYFPDYSIGNLQKILSHDHPPEYSADFYAAYINILLGVFYTVCRDLKELRHLAVLNFPKYCEPVVKGEASERDTRKLWRNIEPHLKKAMQTVYLREISSSQWEKLQKDDTDPGQLKGLSAHTHVELPYYSKFILIAAYLASYNPARTDKRFFLKHHGKIKKTNFLKKHEKTSNHLLGPKPFPLDRLLAILYSIVDSRVAPTANIFSQITSLVTLQLLTLVGHDDQLDGPKYKCTVSLDFIRAIARTVNFDIIKYLYDFL.

37–44 contributes to the ATP binding site; it reads GHTASGKT.

The protein belongs to the ORC5 family. As to quaternary structure, component of ORC, a complex composed of at least 6 subunits: ORC1, ORC2, ORC3, ORC4, ORC5 and ORC6. ORC is regulated in a cell-cycle dependent manner. It is sequentially assembled at the exit from anaphase of mitosis and disassembled as cells enter S phase. Multi-mono-ubiquitinated by OBI1; ubiquitination is important for efficient DNA replication origin site activation. Ubiquitination levels are low in mitotic and early G1-phAse cells and are induced in late G1-/early S-phase, peaking in S-phase and decrease toward the end of the cell cycle. In terms of tissue distribution, abundant in spleen, ovary, prostate, testis, and colon mucosa.

It localises to the nucleus. It is found in the chromosome. Functionally, component of the origin recognition complex (ORC) that binds origins of replication. DNA-binding is ATP-dependent. The specific DNA sequences that define origins of replication have not been identified yet. ORC is required to assemble the pre-replication complex necessary to initiate DNA replication. The protein is Origin recognition complex subunit 5 (ORC5) of Homo sapiens (Human).